Consider the following 185-residue polypeptide: Ribosome-recycling factor (185 aa).

This sequence belongs to the RRF family.

The protein resides in the cytoplasm. Functionally, responsible for the release of ribosomes from messenger RNA at the termination of protein biosynthesis. May increase the efficiency of translation by recycling ribosomes from one round of translation to another. The protein is Ribosome-recycling factor of Campylobacter hominis (strain ATCC BAA-381 / DSM 21671 / CCUG 45161 / LMG 19568 / NCTC 13146 / CH001A).